We begin with the raw amino-acid sequence, 305 residues long: Transmembrane epididymal protein 1A (305 aa).

Residues F4–I24 form a helical membrane-spanning segment. The N-linked (GlcNAc...) asparagine glycan is linked to N32. 5 helical membrane-spanning segments follow: residues I54–S74, C124–V144, S159–P179, I187–F207, and I223–G243. Positions E285–A305 are disordered.

It belongs to the TMEM45 family.

The protein resides in the membrane. In Mus musculus (Mouse), this protein is Transmembrane epididymal protein 1A.